The following is a 287-amino-acid chain: GPN-loop GTPase 3 (287 aa).

12 to 17 (GAGKST) serves as a coordination point for GTP. Positions 69–71 (GPN) match the Gly-Pro-Asn (GPN)-loop; involved in dimer interface motif. 172–175 (SKMD) contacts GTP.

It belongs to the GPN-loop GTPase family. As to quaternary structure, heterodimers with GPN1 or GPN2. Binds to RNA polymerase II (RNAPII).

Small GTPase required for proper nuclear import of RNA polymerase II and III (RNAPII and RNAPIII). May act at an RNAP assembly step prior to nuclear import. The protein is GPN-loop GTPase 3 of Cryptococcus neoformans var. neoformans serotype D (strain B-3501A) (Filobasidiella neoformans).